The chain runs to 417 residues: Transmembrane protease serine 11G (417 aa).

Topologically, residues 1–22 (MYQPGILGRRKRVCKPWTVALT) are cytoplasmic. A helical; Signal-anchor for type II membrane protein membrane pass occupies residues 23–43 (TTAALLALAVLIGLLVYFLVY). The Extracellular segment spans residues 44-417 (EEKTHYYQAS…RNWIKSKTNI (374 aa)). One can recognise an SEA domain in the interval 46 to 165 (KTHYYQASFW…PYLREMNAAQ (120 aa)). The Peptidase S1 domain occupies 186–416 (IADGKPAGSN…YRNWIKSKTN (231 aa)). Cysteine 211 and cysteine 227 are disulfide-bonded. Residues histidine 226 and aspartate 271 each act as charge relay system in the active site. 2 cysteine pairs are disulfide-bonded: cysteine 336–cysteine 352 and cysteine 363–cysteine 392. The active-site Charge relay system is serine 367.

Belongs to the peptidase S1 family. As to expression, highest expression in lung and tongue. Also expressed in brain, colon, heart and liver. Isoform 1 is the predominant form in tongue whereas both isoforms are expressed in similar amounts in lung. At the cellular level, expression is confined to epithelial cells within the cleft of the circumvallate papillae extending into the ducts of the minor salivary glands, the respiratory epithelium of the nasal cavity and tear gland ducts.

It localises to the membrane. In Rattus norvegicus (Rat), this protein is Transmembrane protease serine 11G (Tmprss11g).